A 373-amino-acid polypeptide reads, in one-letter code: Queuine tRNA-ribosyltransferase (373 aa).

Aspartate 91 functions as the Proton acceptor in the catalytic mechanism. Substrate is bound by residues 91 to 95, aspartate 145, glutamine 187, and glycine 214; that span reads DSGGF. The RNA binding stretch occupies residues 245-251; sequence GVGKPED. The active-site Nucleophile is aspartate 264. An RNA binding; important for wobble base 34 recognition region spans residues 269–273; it reads TRNAR. Positions 302, 304, 307, and 333 each coordinate Zn(2+).

Belongs to the queuine tRNA-ribosyltransferase family. As to quaternary structure, homodimer. Within each dimer, one monomer is responsible for RNA recognition and catalysis, while the other monomer binds to the replacement base PreQ1. It depends on Zn(2+) as a cofactor.

It catalyses the reaction 7-aminomethyl-7-carbaguanine + guanosine(34) in tRNA = 7-aminomethyl-7-carbaguanosine(34) in tRNA + guanine. It participates in tRNA modification; tRNA-queuosine biosynthesis. In terms of biological role, catalyzes the base-exchange of a guanine (G) residue with the queuine precursor 7-aminomethyl-7-deazaguanine (PreQ1) at position 34 (anticodon wobble position) in tRNAs with GU(N) anticodons (tRNA-Asp, -Asn, -His and -Tyr). Catalysis occurs through a double-displacement mechanism. The nucleophile active site attacks the C1' of nucleotide 34 to detach the guanine base from the RNA, forming a covalent enzyme-RNA intermediate. The proton acceptor active site deprotonates the incoming PreQ1, allowing a nucleophilic attack on the C1' of the ribose to form the product. After dissociation, two additional enzymatic reactions on the tRNA convert PreQ1 to queuine (Q), resulting in the hypermodified nucleoside queuosine (7-(((4,5-cis-dihydroxy-2-cyclopenten-1-yl)amino)methyl)-7-deazaguanosine). This chain is Queuine tRNA-ribosyltransferase, found in Idiomarina loihiensis (strain ATCC BAA-735 / DSM 15497 / L2-TR).